The sequence spans 147 residues: Ribosome maturation factor RimP (147 aa).

Belongs to the RimP family.

It is found in the cytoplasm. Functionally, required for maturation of 30S ribosomal subunits. This chain is Ribosome maturation factor RimP, found in Legionella pneumophila (strain Paris).